We begin with the raw amino-acid sequence, 91 residues long: Small ribosomal subunit protein uS19 (91 aa).

The protein belongs to the universal ribosomal protein uS19 family.

Protein S19 forms a complex with S13 that binds strongly to the 16S ribosomal RNA. The sequence is that of Small ribosomal subunit protein uS19 from Synechococcus elongatus (strain ATCC 33912 / PCC 7942 / FACHB-805) (Anacystis nidulans R2).